We begin with the raw amino-acid sequence, 213 residues long: Small ribosomal subunit protein eS1 (213 aa).

It belongs to the eukaryotic ribosomal protein eS1 family.

This Desulfurococcus amylolyticus (strain DSM 18924 / JCM 16383 / VKM B-2413 / 1221n) (Desulfurococcus kamchatkensis) protein is Small ribosomal subunit protein eS1.